Here is a 525-residue protein sequence, read N- to C-terminus: GMP synthase [glutamine-hydrolyzing] (525 aa).

Residues 9–207 enclose the Glutamine amidotransferase type-1 domain; it reads RILILDFGSQ…VRDICQCEAL (199 aa). Cys-86 acts as the Nucleophile in catalysis. Residues His-181 and Glu-183 contribute to the active site. One can recognise a GMPS ATP-PPase domain in the interval 208–400; that stretch reads WTPAKIIDDA…LGLPYDMLYR (193 aa). 235–241 lines the ATP pocket; that stretch reads SGGVDSS.

As to quaternary structure, homodimer.

It catalyses the reaction XMP + L-glutamine + ATP + H2O = GMP + L-glutamate + AMP + diphosphate + 2 H(+). The protein operates within purine metabolism; GMP biosynthesis; GMP from XMP (L-Gln route): step 1/1. Functionally, catalyzes the synthesis of GMP from XMP. In Escherichia coli (strain K12 / MC4100 / BW2952), this protein is GMP synthase [glutamine-hydrolyzing].